Reading from the N-terminus, the 366-residue chain is Homoserine O-acetyltransferase (366 aa).

The AB hydrolase-1 domain maps to 47 to 349 (NAILICHALS…SGEGHDSFLL (303 aa)). S153 (nucleophile) is an active-site residue. Residue R221 participates in substrate binding. Residues D311 and H344 contribute to the active site. Position 345 (D345) interacts with substrate.

The protein belongs to the AB hydrolase superfamily. MetX family. In terms of assembly, homodimer.

Its subcellular location is the cytoplasm. The catalysed reaction is L-homoserine + acetyl-CoA = O-acetyl-L-homoserine + CoA. The protein operates within amino-acid biosynthesis; L-methionine biosynthesis via de novo pathway; O-acetyl-L-homoserine from L-homoserine: step 1/1. In terms of biological role, transfers an acetyl group from acetyl-CoA to L-homoserine, forming acetyl-L-homoserine. The protein is Homoserine O-acetyltransferase of Leptospira interrogans serogroup Icterohaemorrhagiae serovar copenhageni (strain Fiocruz L1-130).